Consider the following 462-residue polypeptide: Phosphoglycerate kinase, chloroplastic (462 aa).

The transit peptide at 1–61 (MALSMKMRAN…AGRSRIVVEA (61 aa)) directs the protein to the chloroplast. 11 residues coordinate (2R)-3-phosphoglycerate: Ala83, Asp84, Asn86, Arg101, Ser123, His124, Gly126, Arg127, Arg183, His215, and Arg216. Gly261 is an ADP binding site. Gly261 lines the CDP pocket. 2 residues coordinate AMP: Lys263 and Lys267. An ATP-binding site is contributed by Lys267. Gly285 serves as a coordination point for ADP. Gly285 contacts CDP. The AMP site is built by Gly286 and Gly358. Positions 286 and 358 each coordinate ATP. 2 residues coordinate CDP: Gly383 and Phe388. Phe388 provides a ligand contact to ADP. Position 389 (Glu389) interacts with AMP. 3 residues coordinate ATP: Glu389, Asp420, and Ser421. Asp420 is a Mg(2+) binding site.

The protein belongs to the phosphoglycerate kinase family. Monomer. Mg(2+) serves as cofactor.

The protein resides in the plastid. It is found in the chloroplast. It carries out the reaction (2R)-3-phosphoglycerate + ATP = (2R)-3-phospho-glyceroyl phosphate + ADP. It participates in carbohydrate biosynthesis; Calvin cycle. In Volvox carteri (Green alga), this protein is Phosphoglycerate kinase, chloroplastic (PGK).